Reading from the N-terminus, the 173-residue chain is MSIILGIDPGSRITGYGVIRQVGRQLTYLGSGCIRTKVDDLPSRLKLIYAGVTEIITQFQPDYFAIEQVFMAKNADSALKLGQARGVAIVAAVNQELPVFEYAARQVKQTVVGIGSAEKSQVQHMVRTLLKLPANPQADAADALAIAITHCHVSQNAMQMSESRLNLARGRLR.

Active-site residues include D8, E67, and D139. Positions 8, 67, and 139 each coordinate Mg(2+).

It belongs to the RuvC family. In terms of assembly, homodimer which binds Holliday junction (HJ) DNA. The HJ becomes 2-fold symmetrical on binding to RuvC with unstacked arms; it has a different conformation from HJ DNA in complex with RuvA. In the full resolvosome a probable DNA-RuvA(4)-RuvB(12)-RuvC(2) complex forms which resolves the HJ. Requires Mg(2+) as cofactor.

The protein localises to the cytoplasm. The catalysed reaction is Endonucleolytic cleavage at a junction such as a reciprocal single-stranded crossover between two homologous DNA duplexes (Holliday junction).. The RuvA-RuvB-RuvC complex processes Holliday junction (HJ) DNA during genetic recombination and DNA repair. Endonuclease that resolves HJ intermediates. Cleaves cruciform DNA by making single-stranded nicks across the HJ at symmetrical positions within the homologous arms, yielding a 5'-phosphate and a 3'-hydroxyl group; requires a central core of homology in the junction. The consensus cleavage sequence is 5'-(A/T)TT(C/G)-3'. Cleavage occurs on the 3'-side of the TT dinucleotide at the point of strand exchange. HJ branch migration catalyzed by RuvA-RuvB allows RuvC to scan DNA until it finds its consensus sequence, where it cleaves and resolves the cruciform DNA. In Salmonella agona (strain SL483), this protein is Crossover junction endodeoxyribonuclease RuvC.